A 243-amino-acid chain; its full sequence is Tyrosine recombinase XerD-like (243 aa).

Positions 1 to 72 (MKQAIESFIQ…AVNQFLYFLY (72 aa)) constitute a Core-binding (CB) domain. Positions 91–243 (SVKKKLERED…KTSMSLEKFR (153 aa)) constitute a Tyr recombinase domain. Active-site residues include Lys149 and Arg210.

It belongs to the 'phage' integrase family. XerD-like subfamily.

The protein localises to the cytoplasm. In terms of biological role, putative tyrosine recombinase. Not involved in the cutting and rejoining of the recombining DNA molecules on dif(SL) site. This is Tyrosine recombinase XerD-like from Streptococcus suis (strain 98HAH33).